The following is an 885-amino-acid chain: Translation initiation factor IF-2 (885 aa).

Disordered stretches follow at residues 55-150 (IPDK…ADVT) and 269-300 (NTINSFGEGGIQRRARKKHKKPENKQNSEAVT). Over residues 65-146 (EPKAKKEPKK…AEAPKPKESL (82 aa)) the composition is skewed to basic and acidic residues. The span at 281 to 290 (RRARKKHKKP) shows a compositional bias: basic residues. Positions 384–553 (PRAPVITIMG…LLQADLLELK (170 aa)) constitute a tr-type G domain. The G1 stretch occupies residues 393–400 (GHVDHGKT). 393-400 (GHVDHGKT) contacts GTP. Residues 418 to 422 (GITQH) are G2. The interval 439–442 (DTPG) is G3. GTP is bound by residues 439–443 (DTPGH) and 493–496 (NKMD). The G4 stretch occupies residues 493-496 (NKMD). Positions 529 to 531 (SAK) are G5.

It belongs to the TRAFAC class translation factor GTPase superfamily. Classic translation factor GTPase family. IF-2 subfamily.

The protein resides in the cytoplasm. Its function is as follows. One of the essential components for the initiation of protein synthesis. Protects formylmethionyl-tRNA from spontaneous hydrolysis and promotes its binding to the 30S ribosomal subunits. Also involved in the hydrolysis of GTP during the formation of the 70S ribosomal complex. The polypeptide is Translation initiation factor IF-2 (Campylobacter concisus (strain 13826)).